Here is a 272-residue protein sequence, read N- to C-terminus: Shikimate dehydrogenase (NADP(+)) (272 aa).

Shikimate-binding positions include 14–16 (SKS) and T61. The active-site Proton acceptor is the K65. NADP(+) is bound at residue E77. The shikimate site is built by N86 and D102. Residues 126–130 (GAGGA), 149–154 (NRTVSR), and M213 each bind NADP(+). Y215 lines the shikimate pocket. Residue G237 participates in NADP(+) binding.

It belongs to the shikimate dehydrogenase family. Homodimer.

The catalysed reaction is shikimate + NADP(+) = 3-dehydroshikimate + NADPH + H(+). Its pathway is metabolic intermediate biosynthesis; chorismate biosynthesis; chorismate from D-erythrose 4-phosphate and phosphoenolpyruvate: step 4/7. Its function is as follows. Involved in the biosynthesis of the chorismate, which leads to the biosynthesis of aromatic amino acids. Catalyzes the reversible NADPH linked reduction of 3-dehydroshikimate (DHSA) to yield shikimate (SA). In Escherichia coli O157:H7, this protein is Shikimate dehydrogenase (NADP(+)).